We begin with the raw amino-acid sequence, 184 residues long: dTTP/UTP pyrophosphatase (184 aa).

The active-site Proton acceptor is Asp65.

The protein belongs to the Maf family. YhdE subfamily. The cofactor is a divalent metal cation.

Its subcellular location is the cytoplasm. It carries out the reaction dTTP + H2O = dTMP + diphosphate + H(+). The catalysed reaction is UTP + H2O = UMP + diphosphate + H(+). Functionally, nucleoside triphosphate pyrophosphatase that hydrolyzes dTTP and UTP. May have a dual role in cell division arrest and in preventing the incorporation of modified nucleotides into cellular nucleic acids. The protein is dTTP/UTP pyrophosphatase of Thermococcus onnurineus (strain NA1).